Here is a 137-residue protein sequence, read N- to C-terminus: Protein Turandot X (137 aa).

Positions 1–24 (MRVPVFQLSCLLGLIVCLLCSVKA) are cleaved as a signal peptide.

This sequence belongs to the Turandot family.

Its subcellular location is the secreted. Its function is as follows. A humoral factor that may play a role in stress tolerance. In Drosophila pseudoobscura pseudoobscura (Fruit fly), this protein is Protein Turandot X.